Reading from the N-terminus, the 315-residue chain is 4-hydroxy-3-methylbut-2-enyl diphosphate reductase (315 aa).

A [4Fe-4S] cluster-binding site is contributed by C12. Residues H41 and H74 each contribute to the (2E)-4-hydroxy-3-methylbut-2-enyl diphosphate site. Dimethylallyl diphosphate is bound by residues H41 and H74. Positions 41 and 74 each coordinate isopentenyl diphosphate. C96 provides a ligand contact to [4Fe-4S] cluster. Residue H124 participates in (2E)-4-hydroxy-3-methylbut-2-enyl diphosphate binding. H124 lines the dimethylallyl diphosphate pocket. H124 contacts isopentenyl diphosphate. The active-site Proton donor is E126. T168 contacts (2E)-4-hydroxy-3-methylbut-2-enyl diphosphate. A [4Fe-4S] cluster-binding site is contributed by C198. Positions 226, 227, 228, and 270 each coordinate (2E)-4-hydroxy-3-methylbut-2-enyl diphosphate. 4 residues coordinate dimethylallyl diphosphate: S226, S227, N228, and S270. Isopentenyl diphosphate-binding residues include S226, S227, N228, and S270.

It belongs to the IspH family. It depends on [4Fe-4S] cluster as a cofactor.

It catalyses the reaction isopentenyl diphosphate + 2 oxidized [2Fe-2S]-[ferredoxin] + H2O = (2E)-4-hydroxy-3-methylbut-2-enyl diphosphate + 2 reduced [2Fe-2S]-[ferredoxin] + 2 H(+). The enzyme catalyses dimethylallyl diphosphate + 2 oxidized [2Fe-2S]-[ferredoxin] + H2O = (2E)-4-hydroxy-3-methylbut-2-enyl diphosphate + 2 reduced [2Fe-2S]-[ferredoxin] + 2 H(+). The protein operates within isoprenoid biosynthesis; dimethylallyl diphosphate biosynthesis; dimethylallyl diphosphate from (2E)-4-hydroxy-3-methylbutenyl diphosphate: step 1/1. It participates in isoprenoid biosynthesis; isopentenyl diphosphate biosynthesis via DXP pathway; isopentenyl diphosphate from 1-deoxy-D-xylulose 5-phosphate: step 6/6. Functionally, catalyzes the conversion of 1-hydroxy-2-methyl-2-(E)-butenyl 4-diphosphate (HMBPP) into a mixture of isopentenyl diphosphate (IPP) and dimethylallyl diphosphate (DMAPP). Acts in the terminal step of the DOXP/MEP pathway for isoprenoid precursor biosynthesis. This chain is 4-hydroxy-3-methylbut-2-enyl diphosphate reductase, found in Pseudomonas syringae pv. syringae (strain B728a).